Here is a 529-residue protein sequence, read N- to C-terminus: Basal body-orientation factor 1 (529 aa).

The segment covering 1 to 13 (MPSKGKDKKKGKS) has biased composition (basic residues). Residues 1–22 (MPSKGKDKKKGKSRGKDTKKLI) form a disordered region. 2 coiled-coil regions span residues 55 to 198 (DTSR…LKQE) and 271 to 361 (IKEK…EVER). The tract at residues 510–529 (GKVVLPTIPKGPQESDTGTF) is disordered.

Belongs to the BBOF1 family. Interacts with MNS1 and ODF2.

The protein resides in the cytoplasm. It is found in the cytoskeleton. Its subcellular location is the cilium basal body. The protein localises to the flagellum axoneme. In terms of biological role, plays an essential role in sperm motility and male fertility by stabilizing the sperm flagellar axonemal structure. May be required for the stability of ODF2 and MANS1 proteins. Dispensable for the assembly and function of motile cilia. In Macaca fascicularis (Crab-eating macaque), this protein is Basal body-orientation factor 1.